The chain runs to 191 residues: Adenylate kinase (191 aa).

12-17 contacts ATP; it reads GSGKTT. The interval 34-63 is NMP; sequence STGDLLRAESAKKTERGLLIEKFTSQGELV. AMP-binding positions include threonine 35, arginine 40, 61–63, 88–91, and glutamine 95; these read ELV and GYPR. The interval 130–136 is LID; the sequence is GRSRGAD. Residue arginine 131 participates in ATP binding. Positions 133 and 145 each coordinate AMP. An ATP-binding site is contributed by arginine 173.

The protein belongs to the adenylate kinase family. Monomer.

It localises to the cytoplasm. It catalyses the reaction AMP + ATP = 2 ADP. It functions in the pathway purine metabolism; AMP biosynthesis via salvage pathway; AMP from ADP: step 1/1. Functionally, catalyzes the reversible transfer of the terminal phosphate group between ATP and AMP. Plays an important role in cellular energy homeostasis and in adenine nucleotide metabolism. The protein is Adenylate kinase of Helicobacter pylori (strain Shi470).